The sequence spans 117 residues: Gamma-aminobutyric acid receptor-associated protein-like 1 (117 aa).

Residue G116 is the site of Phosphatidylethanolamine amidated glycine; alternate attachment. Residue G116 is the site of Phosphatidylserine amidated glycine; alternate attachment. Position 117 (K117) is a propeptide, removed in mature form.

It belongs to the ATG8 family. As to quaternary structure, interacts with ATG13, OPRK1, RB1CC1 and ULK1. Interacts with TP53INP1 and TP53INP2. Directly interacts with SQSTM1. Interacts with ATG3, ATG7 and MAP15. Interacts with TECPR2. Interacts with TBC1D5. Interacts with MAPK15. Interacts with TRIM5. Interacts with MEFV and TRIM21. Interacts with WDFY3. Interacts with the reticulophagy receptor TEX264. Interacts with UBA5. Interacts with KBTBD6 and KBTBD7; the interaction is direct. Interacts with reticulophagy regulators RETREG1, RETREG2 and RETREG3. Interacts with IRGM. Interacts with DNM2. Interacts with NCOA4 (via C-terminus). In terms of processing, the precursor molecule is cleaved by ATG4 (ATG4A, ATG4B, ATG4C or ATG4D) to expose the glycine at the C-terminus and form the cytosolic form, GABARAPL1-I. The processed form is then activated by APG7L/ATG7, transferred to ATG3 and conjugated to phosphatidylethanolamine (PE) phospholipid to form the membrane-bound form, GABARAPL1-II. During non-canonical autophagy, the processed form is conjugated to phosphatidylserine (PS) phospholipid. ATG4 proteins also mediate the delipidation of PE-conjugated forms required for GABARAPL1 recycling when autophagosomes fuse with lysosomes. In addition, ATG4B and ATG4D mediate delipidation of ATG8 proteins conjugated to PS during non-canonical autophagy. ATG4B constitutes the major protein for proteolytic activation. ATG4D is the main enzyme for delipidation activity.

The protein localises to the cytoplasmic vesicle. The protein resides in the autophagosome. It localises to the cytoplasmic vesicle membrane. It is found in the cytoplasm. Its subcellular location is the cytoskeleton. The protein localises to the endoplasmic reticulum. The protein resides in the golgi apparatus. Ubiquitin-like modifier that increases cell-surface expression of kappa-type opioid receptor through facilitating anterograde intracellular trafficking of the receptor. Involved in formation of autophagosomal vacuoles. While LC3s are involved in elongation of the phagophore membrane, the GABARAP/GATE-16 subfamily is essential for a later stage in autophagosome maturation. Through its interaction with the reticulophagy receptor TEX264, participates in the remodeling of subdomains of the endoplasmic reticulum into autophagosomes upon nutrient stress, which then fuse with lysosomes for endoplasmic reticulum turnover. In Bos taurus (Bovine), this protein is Gamma-aminobutyric acid receptor-associated protein-like 1.